The primary structure comprises 316 residues: Mannose-6-phosphate isomerase (316 aa).

Residues glutamine 95, histidine 97, glutamate 114, and histidine 171 each contribute to the Zn(2+) site. Residue arginine 191 is part of the active site.

The protein belongs to the mannose-6-phosphate isomerase type 1 family. The cofactor is Zn(2+).

The enzyme catalyses D-mannose 6-phosphate = D-fructose 6-phosphate. The chain is Mannose-6-phosphate isomerase (pmi) from Streptococcus mutans serotype c (strain ATCC 700610 / UA159).